Consider the following 891-residue polypeptide: Major core protein 4a precursor (891 aa).

Belongs to the poxviridae protein P4a family. In terms of assembly, interacts with P39/A4.

The protein resides in the virion. In terms of biological role, core protein 4a is the most abundant virion protein. Major component of the virion core that undergoes proteolytic processing during the immature virion (IV) to mature virion (MV) transition. The polypeptide is Major core protein 4a precursor (Fowlpox virus (strain NVSL) (FPV)).